A 162-amino-acid polypeptide reads, in one-letter code: Nucleotide-binding protein Francci3_0558 (162 aa).

It belongs to the YajQ family.

Functionally, nucleotide-binding protein. In Frankia casuarinae (strain DSM 45818 / CECT 9043 / HFP020203 / CcI3), this protein is Nucleotide-binding protein Francci3_0558.